A 250-amino-acid chain; its full sequence is MRTPLVVGNWKMNGSRAANRALLESMRKEMEAGVTAEVAVCPPFVYLADMESLLQGSVINWGAQNLSHHEVGAYTGEIAPSMLADLGCRFVIVGHSERRTLYGETDSLVAEKAIVAQKVNIIPIICVGETLQEREQNITEQVVKRQLNAVLELAGVNALEKAVIAYEPIWAIGTGRTATPEQAQEVHALIRSHVAIQNSGIAEELLILYGGSVKGNNAAELLAMPDIDGGLIGGASLDAKEFLTICQAAG.

9–11 serves as a coordination point for substrate; it reads NWK. The active-site Electrophile is the H95. E167 serves as the catalytic Proton acceptor. Substrate-binding positions include G173, S212, and 233-234; that span reads GG.

It belongs to the triosephosphate isomerase family. As to quaternary structure, homodimer.

The protein resides in the cytoplasm. The catalysed reaction is D-glyceraldehyde 3-phosphate = dihydroxyacetone phosphate. Its pathway is carbohydrate biosynthesis; gluconeogenesis. It functions in the pathway carbohydrate degradation; glycolysis; D-glyceraldehyde 3-phosphate from glycerone phosphate: step 1/1. Functionally, involved in the gluconeogenesis. Catalyzes stereospecifically the conversion of dihydroxyacetone phosphate (DHAP) to D-glyceraldehyde-3-phosphate (G3P). The protein is Triosephosphate isomerase of Nitrosococcus oceani (strain ATCC 19707 / BCRC 17464 / JCM 30415 / NCIMB 11848 / C-107).